The following is a 190-amino-acid chain: Large ribosomal subunit protein bL25 (190 aa).

The protein belongs to the bacterial ribosomal protein bL25 family. CTC subfamily. In terms of assembly, part of the 50S ribosomal subunit; part of the 5S rRNA/L5/L18/L25 subcomplex. Contacts the 5S rRNA. Binds to the 5S rRNA independently of L5 and L18.

This is one of the proteins that binds to the 5S RNA in the ribosome where it forms part of the central protuberance. The protein is Large ribosomal subunit protein bL25 of Neisseria meningitidis serogroup C / serotype 2a (strain ATCC 700532 / DSM 15464 / FAM18).